The sequence spans 433 residues: Serine hydroxymethyltransferase (433 aa).

(6S)-5,6,7,8-tetrahydrofolate is bound by residues L133 and 137 to 139 (GHL). At K242 the chain carries N6-(pyridoxal phosphate)lysine. 366–368 (SPF) lines the (6S)-5,6,7,8-tetrahydrofolate pocket.

Belongs to the SHMT family. As to quaternary structure, homodimer. Requires pyridoxal 5'-phosphate as cofactor.

The protein resides in the cytoplasm. It carries out the reaction (6R)-5,10-methylene-5,6,7,8-tetrahydrofolate + glycine + H2O = (6S)-5,6,7,8-tetrahydrofolate + L-serine. The protein operates within one-carbon metabolism; tetrahydrofolate interconversion. It functions in the pathway amino-acid biosynthesis; glycine biosynthesis; glycine from L-serine: step 1/1. Its function is as follows. Catalyzes the reversible interconversion of serine and glycine with tetrahydrofolate (THF) serving as the one-carbon carrier. This reaction serves as the major source of one-carbon groups required for the biosynthesis of purines, thymidylate, methionine, and other important biomolecules. Also exhibits THF-independent aldolase activity toward beta-hydroxyamino acids, producing glycine and aldehydes, via a retro-aldol mechanism. The chain is Serine hydroxymethyltransferase from Beijerinckia indica subsp. indica (strain ATCC 9039 / DSM 1715 / NCIMB 8712).